A 991-amino-acid polypeptide reads, in one-letter code: Toll-like receptor 13 (991 aa).

An N-terminal signal peptide occupies residues 1 to 68 (MSGLYRILVQ…GFSLPPVAET (68 aa)). The Extracellular portion of the chain corresponds to 69–783 (YGFNKCTQYE…DAMCNFDLGK (715 aa)). Residues Asn-93, Asn-109, and Asn-125 are each glycosylated (N-linked (GlcNAc...) asparagine). LRR repeat units lie at residues 104-125 (YTTH…SFTN), 128-149 (ALVD…AFRG), 152-174 (NLTL…EGLS), 175-196 (SLKT…AFTP), 199-220 (KLKY…LEAV), 225-246 (CLER…PRSL), 248-268 (SLTH…SALS), 271-292 (NLTN…YLKT), 295-315 (QLKS…SAKH), 318-338 (NLRA…DMKT), 348-368 (KLET…KQLA), 372-394 (RLLF…EFNA), 397-418 (SLQK…TWSS), 421-442 (NLTS…AFSP), 445-466 (HLEF…AFSG), 469-490 (ALKE…SFTQ), 493-514 (NLEV…TFRP), 517-538 (KLQS…SFSG), 541-562 (NLRS…LFSG), 565-585 (KLLI…RTLQ), 594-617 (SLKQ…FFQG), 620-641 (SLQE…QFDP), 644-665 (NLTK…LNAS), 672-693 (RLKI…MFSS), and 696-716 (SLQV…SHLK). 2 N-linked (GlcNAc...) asparagine glycosylation sites follow: Asn-152 and Asn-167. N-linked (GlcNAc...) asparagine glycosylation is found at Asn-209, Asn-233, Asn-263, Asn-271, Asn-274, Asn-300, and Asn-310. Asn-357, Asn-388, Asn-413, and Asn-421 each carry an N-linked (GlcNAc...) asparagine glycan. N-linked (GlcNAc...) asparagine glycans are attached at residues Asn-644 and Asn-663. Asn-711 and Asn-742 each carry an N-linked (GlcNAc...) asparagine glycan. In terms of domain architecture, LRRCT spans 729–779 (NKLQCTCDNLWFKNWSMNTEEVHIPFLRSYPCQQPGSQSLLIDFDDAMCNF). The chain crosses the membrane as a helical span at residues 784-804 (VYFLCSFSMVLSTMVFSWFST). Over 805–991 (KMIASLWYGL…KENTHLIVVE (187 aa)) the chain is Cytoplasmic. Residues 832–975 (FLYDAFVSFS…LFWARIRNAL (144 aa)) enclose the TIR domain.

This sequence belongs to the Toll-like receptor family. As to quaternary structure, binds MYD88 via their respective TIR domains. Interacts with UNC93B1.

Its subcellular location is the endosome membrane. Component of innate and adaptive immunity that recognizes and binds 23S rRNA from bacteria. TLRs (Toll-like receptors) control host immune response against pathogens through recognition of molecular patterns specific to microorganisms. Acts via MYD88 and TRAF6, leading to NF-kappa-B activation, cytokine secretion and the inflammatory response. Specifically binds the 5'-CGGAAAGACC-3' sequence on bacterial 23S rRNA, a sequence also bound by MLS group antibiotics (including erythromycin). May also recognize vesicular stomatitis virus; however, these data require additional evidences. The sequence is that of Toll-like receptor 13 (Tlr13) from Mus musculus (Mouse).